The sequence spans 99 residues: RNA-binding protein Hfq (99 aa).

Residues 9–68 (DPFLNALRRERVPVSIYLVNGIKLQGQIESFDQFVILLKNTVSQMVYKHAISTVVPSRPV) enclose the Sm domain. Residues 64–99 (PSRPVSHHSNNPGGSNNYHGSNTTAQQQSQDADDAE) form a disordered region. The span at 70 to 93 (HHSNNPGGSNNYHGSNTTAQQQSQ) shows a compositional bias: low complexity.

This sequence belongs to the Hfq family. As to quaternary structure, homohexamer.

RNA chaperone that binds small regulatory RNA (sRNAs) and mRNAs to facilitate mRNA translational regulation in response to envelope stress, environmental stress and changes in metabolite concentrations. Also binds with high specificity to tRNAs. The polypeptide is RNA-binding protein Hfq (Pectobacterium atrosepticum (strain SCRI 1043 / ATCC BAA-672) (Erwinia carotovora subsp. atroseptica)).